The following is a 75-amino-acid chain: Lividin-3 (75 aa).

The first 22 residues, methionine 1–cysteine 22, serve as a signal peptide directing secretion. The propeptide occupies glutamate 23–valine 40. Residues cysteine 69 and cysteine 75 are joined by a disulfide bond.

In terms of tissue distribution, expressed by the skin glands.

Its subcellular location is the secreted. Functionally, antimicrobial peptide. This chain is Lividin-3, found in Odorrana livida (Green mountain frog).